Reading from the N-terminus, the 155-residue chain is Anaerobic ribonucleoside-triphosphate reductase-activating protein (155 aa).

The [4Fe-4S] cluster site is built by Cys26, Cys30, and Cys33. S-adenosyl-L-methionine-binding positions include 32 to 34 (GCY) and Gly74.

It belongs to the organic radical-activating enzymes family. As to quaternary structure, forms a tetramer composed of two NrdD and two NrdG subunits. It depends on [4Fe-4S] cluster as a cofactor.

It localises to the cytoplasm. The catalysed reaction is glycyl-[protein] + reduced [flavodoxin] + S-adenosyl-L-methionine = glycin-2-yl radical-[protein] + semiquinone [flavodoxin] + 5'-deoxyadenosine + L-methionine + H(+). Its function is as follows. Activation of anaerobic ribonucleoside-triphosphate reductase under anaerobic conditions by generation of an organic free radical, using S-adenosylmethionine and reduced flavodoxin as cosubstrates to produce 5'-deoxy-adenosine. The protein is Anaerobic ribonucleoside-triphosphate reductase-activating protein (nrdG) of Haemophilus influenzae (strain ATCC 51907 / DSM 11121 / KW20 / Rd).